The chain runs to 111 residues: Toxin 3FTx-Tri3 (111 aa).

The N-terminal stretch at 1–19 (MKTLLLALVVVAFMCLGSA) is a signal peptide. The propeptide occupies 20 to 34 (DEVGLGNEQIDRGRR). Residue Gln-35 is modified to Pyrrolidone carboxylic acid. 4 disulfides stabilise this stretch: Cys-44-Cys-68, Cys-47-Cys-87, Cys-91-Cys-102, and Cys-103-Cys-108.

This sequence belongs to the three-finger toxin family. Ancestral subfamily. Boigatoxin sub-subfamily. In terms of tissue distribution, expressed by the venom gland.

The protein localises to the secreted. In terms of biological role, potent postsynaptic neurotoxin. Displays readily reversible competitive antagonism at the nicotinic acetylcholine receptor (nAChR). The chain is Toxin 3FTx-Tri3 from Trimorphodon biscutatus (Western lyre snake).